The sequence spans 134 residues: Profilin-3 (134 aa).

Residues cysteine 13 and cysteine 118 are joined by a disulfide bond. The short motif at 84-100 (AVIRGKKGSGGITIKKT) is the Involved in PIP2 interaction element. Position 114 is a phosphothreonine (threonine 114).

The protein belongs to the profilin family. In terms of assembly, occurs in many kinds of cells as a complex with monomeric actin in a 1:1 ratio. Post-translationally, phosphorylated by MAP kinases.

The protein resides in the cytoplasm. It localises to the cytoskeleton. Functionally, binds to actin and affects the structure of the cytoskeleton. At high concentrations, profilin prevents the polymerization of actin, whereas it enhances it at low concentrations. The polypeptide is Profilin-3 (Olea europaea (Common olive)).